A 645-amino-acid chain; its full sequence is Synaptotagmin-16 (645 aa).

Disordered regions lie at residues 102–121 (AQNS…STMS), 144–192 (EHHL…DSDE), and 206–344 (QSFR…PSGV). Residues 167 to 177 (ETVNGKKQVNS) are compositionally biased toward polar residues. Positions 179–192 (GDDEELSTSSDSDE) are enriched in acidic residues. Residues 287 to 303 (HQESSVVQSLRRQSTEG) are compositionally biased toward polar residues. The C2 1 domain occupies 350–469 (KCGDLDVIFE…HPEGEMKVTL (120 aa)). The segment at 478-503 (SSGGSPLSPSAVSHSDSTSSTQSLSH) is disordered. Positions 485–502 (SPSAVSHSDSTSSTQSLS) are enriched in low complexity. Residues 505–640 (GAPELLVGLS…TKGQQICRWH (136 aa)) form the C2 2 domain.

It belongs to the synaptotagmin family. As to quaternary structure, homodimer. Can also form heterodimers. As to expression, expressed in brain.

In terms of biological role, may be involved in the trafficking and exocytosis of secretory vesicles in non-neuronal tissues. Is Ca(2+)-independent. This chain is Synaptotagmin-16 (SYT16), found in Homo sapiens (Human).